Reading from the N-terminus, the 711-residue chain is C6 finger domain transcription factor nscR (711 aa).

Positions 17-43 (CELCRERKVKCDKLDPCTNCSSAGVIC) form a DNA-binding region, zn(2)-C6 fungal-type. A disordered region spans residues 372–394 (SPPKHINDSDFDPTTSHDVPDRE).

It is found in the nucleus. In terms of biological role, transcription factor that specifically regulates the neosartoricin B biosynthesis gene cluster. In Trichophyton tonsurans (strain CBS 112818) (Scalp ringworm fungus), this protein is C6 finger domain transcription factor nscR.